Here is a 136-residue protein sequence, read N- to C-terminus: Large ribosomal subunit protein bL12 (136 aa).

The protein belongs to the bacterial ribosomal protein bL12 family. In terms of assembly, homodimer. Part of the ribosomal stalk of the 50S ribosomal subunit. Forms a multimeric L10(L12)X complex, where L10 forms an elongated spine to which 2 to 4 L12 dimers bind in a sequential fashion. Binds GTP-bound translation factors.

Forms part of the ribosomal stalk which helps the ribosome interact with GTP-bound translation factors. Is thus essential for accurate translation. In Synechococcus sp. (strain JA-2-3B'a(2-13)) (Cyanobacteria bacterium Yellowstone B-Prime), this protein is Large ribosomal subunit protein bL12.